Here is a 48-residue protein sequence, read N- to C-terminus: GVACRCDSDGPTVRGDSLSGTLWLTGGCPSGWHNCRGSGPFIGYCCKK.

Intrachain disulfides connect C4-C45, C6-C35, and C28-C46.

This sequence belongs to the sea anemone sodium channel inhibitory toxin family. Type I subfamily.

Its subcellular location is the secreted. It localises to the nematocyst. Its function is as follows. Binds to the sodium channels Nav1.1/SCN1A (EC(50)=165 nM), Nav1.5/SCN5A (EC(50)=103 nM) and Nav1.6/SCN8A (EC(50)=133 nM), thereby delaying their inactivation. Also inhibits Nav1.2/SCN2A, Nav1.3/SCN3A, and Nav1.4/SCN4A, but to a lesser extent. Inhibits Nav1.5 differently from isoforms Nav1.1 and Nav1.6. In Nav1.5 the effect consists in a right-shift of inactivation; whereas in both Nav1.1 and Nav1.6 the effect consists in an incomplete inactivation. This is Delta-actitoxin-Bcg1b from Bunodosoma cangicum (Sea anemone).